The chain runs to 876 residues: Ergothioneine biosynthesis protein 1 (876 aa).

The interval 36–350 (IIDIRRVAVE…TYGNEYGLHL (315 aa)) is L-histidine N(alpha)-methyltransferase. Position 88 (Y88) interacts with L-histidine. 3 residues coordinate S-adenosyl-L-methionine: G119, K125, and D146. L-histidine-binding positions include N202, Y242, and 315–317 (EQS). Residues 378 to 874 (ALWATWDVVT…YAWVGARVVR (497 aa)) form a hercynylcysteine S-oxide synthase region. The Fe cation site is built by H413, H506, and H510. 2 disordered regions span residues 631–650 (GTTNSVSGHHSNRTSKQQLP) and 732–761 (TNNGVEITPPSSPSSETPAESSSPSDSNTT). The span at 744-758 (PSSETPAESSSPSDS) shows a compositional bias: low complexity.

In the N-terminal section; belongs to the methyltransferase superfamily. EgtD family. It in the C-terminal section; belongs to the EgtB family. Requires Fe(2+) as cofactor.

It localises to the cytoplasm. The protein localises to the nucleus. The catalysed reaction is L-histidine + 3 S-adenosyl-L-methionine = hercynine + 3 S-adenosyl-L-homocysteine + 3 H(+). The enzyme catalyses hercynine + L-cysteine + O2 = S-(hercyn-2-yl)-L-cysteine S-oxide + H2O. It functions in the pathway amino-acid biosynthesis; ergothioneine biosynthesis. In terms of biological role, catalyzes the SAM-dependent triple methylation of the alpha-amino group of histidine to form hercynine and subsequent conjugation with cysteine and oxygen to form hercynylcysteine sulfoxide, the first two steps in the biosynthesis pathway of ergothioneine. Ergothioneine is an unusual thio-histidine betaine amino acid that acts as an antioxidant against peroxide in conidia and contributes to conidial longevity. This is Ergothioneine biosynthesis protein 1 from Neurospora crassa (strain ATCC 24698 / 74-OR23-1A / CBS 708.71 / DSM 1257 / FGSC 987).